A 273-amino-acid chain; its full sequence is Diaminopimelate epimerase (273 aa).

2 residues coordinate substrate: Asn11 and Asn60. Cys69 functions as the Proton donor in the catalytic mechanism. Substrate is bound by residues 70-71 (GN), Asn181, and 199-200 (ER). Cys209 functions as the Proton acceptor in the catalytic mechanism. Substrate is bound at residue 210-211 (GT).

The protein belongs to the diaminopimelate epimerase family. As to quaternary structure, homodimer.

It localises to the cytoplasm. The catalysed reaction is (2S,6S)-2,6-diaminopimelate = meso-2,6-diaminopimelate. It functions in the pathway amino-acid biosynthesis; L-lysine biosynthesis via DAP pathway; DL-2,6-diaminopimelate from LL-2,6-diaminopimelate: step 1/1. Catalyzes the stereoinversion of LL-2,6-diaminopimelate (L,L-DAP) to meso-diaminopimelate (meso-DAP), a precursor of L-lysine and an essential component of the bacterial peptidoglycan. This Helicobacter pylori (strain HPAG1) protein is Diaminopimelate epimerase.